The sequence spans 276 residues: Probable transposase for insertion sequence element IS702 (276 aa).

The DDE Tnp4 domain occupies 118 to 256 (MDVTESPIER…SNQYRNRHRR (139 aa)). Residues aspartate 119, aspartate 170, aspartate 190, and glutamate 234 each contribute to the a divalent metal cation site.

This sequence belongs to the transposase 11 family. It depends on a divalent metal cation as a cofactor.

Its function is as follows. Involved in the transposition of the insertion sequence. The protein is Probable transposase for insertion sequence element IS702 of Microchaete diplosiphon (Fremyella diplosiphon).